A 907-amino-acid polypeptide reads, in one-letter code: Envelope glycoprotein B (907 aa).

An N-terminal signal peptide occupies residues Met1–Ser24. At Ser25–Pro751 the chain is on the virion surface side. A disordered region spans residues Arg29–Thr62. Residues His41–Thr62 show a composition bias toward low complexity. Residues Asn68, Asn73, and Asn85 are each glycosylated (N-linked (GlcNAc...) asparagine; by host). 4 disulfides stabilise this stretch: Cys94–Cys551, Cys111–Cys507, Cys185–Cys250, and Cys344–Cys391. An involved in fusion and/or binding to host membrane region spans residues Ser152–Thr158. Asn208 carries an N-linked (GlcNAc...) asparagine; by host glycan. The involved in fusion and/or binding to host membrane stretch occupies residues Gly237–Glu244. N-linked (GlcNAc...) asparagine; by host glycosylation is found at Asn281, Asn286, Asn302, Asn341, Asn383, Asn405, Asn409, Asn417, Asn447, Asn452, Asn456, Asn466, Asn555, and Asn586. Cys574 and Cys611 are disulfide-bonded. Residues Val697–Lys749 form a hydrophobic membrane proximal region region. Residues Phe752–Tyr772 form a helical membrane-spanning segment. The Intravirion portion of the chain corresponds to Thr773–Val907. 2 stretches are compositionally biased toward polar residues: residues Val798–Ala810 and Arg860–Asp877. Disordered regions lie at residues Val798 to Pro838 and Ala857 to Val907. A compositionally biased stretch (basic and acidic residues) spans Lys878–Arg887. An Internalization motif motif is present at residues Tyr895–Leu898.

It belongs to the herpesviridae glycoprotein B family. In terms of assembly, homotrimer; disulfide-linked. Binds to heparan sulfate proteoglycans. Interacts with gH/gL heterodimer. Post-translationally, a proteolytic cleavage by host furin generates two subunits that remain linked by disulfide bonds.

The protein resides in the virion membrane. It localises to the host cell membrane. Its subcellular location is the host endosome membrane. The protein localises to the host Golgi apparatus membrane. Its function is as follows. Envelope glycoprotein that forms spikes at the surface of virion envelope. Essential for the initial attachment to heparan sulfate moieties of the host cell surface proteoglycans. Involved in fusion of viral and cellular membranes leading to virus entry into the host cell. Following initial binding to its host receptors, membrane fusion is mediated by the fusion machinery composed at least of gB and the heterodimer gH/gL. May be involved in the fusion between the virion envelope and the outer nuclear membrane during virion egress. The chain is Envelope glycoprotein B from Human cytomegalovirus (strain Merlin) (HHV-5).